A 1009-amino-acid polypeptide reads, in one-letter code: Glutamate receptor ionotropic, delta-1 (1009 aa).

The first 20 residues, 1–20 (MEALTLWLLPWICQCVTVRA), serve as a signal peptide directing secretion. The interaction with CBLN1 stretch occupies residues 21 to 436 (DSIIHIGAIF…ERPMGSRLQG (416 aa)). Over 21–562 (DSIIHIGAIF…SIFSLFAPFD (542 aa)) the chain is Extracellular. Cystine bridges form between cysteine 80–cysteine 351, cysteine 96–cysteine 128, and cysteine 294–cysteine 306. N-linked (GlcNAc...) asparagine glycans are attached at residues asparagine 131 and asparagine 200. Residues asparagine 422 and asparagine 498 are each glycosylated (N-linked (GlcNAc...) asparagine). Ca(2+) contacts are provided by glutamate 527, valine 530, and aspartate 531. A helical membrane pass occupies residues 563–583 (FAVWACIAAAIPVVGVLIFVL). Residues 584–637 (NRIQAVRSQSATQPRPSASATLHSAIWIVYGAFVQQGGESSVNSVAMRIVMGSW) are Cytoplasmic-facing. A helical transmembrane segment spans residues 638–658 (WLFTLIVCSSYTANLAAFLTV). At 659 to 830 (SRMDNPIRTF…TEGKSLKLHS (172 aa)) the chain is on the extracellular side. Residues aspartate 753, aspartate 755, and serine 757 each contribute to the Ca(2+) site. The chain crosses the membrane as a helical span at residues 831–851 (FAGVFCILAIGLLLACLVAAL). The Cytoplasmic segment spans residues 852-1009 (ELWWNSNRCH…ALDTSHGTSI (158 aa)). A compositionally biased stretch (polar residues) spans 931–942 (LPEQSSHGTSRT). Residues 931-960 (LPEQSSHGTSRTLSSGPSSNLPLPLSSSAT) are disordered. Residues 943–958 (LSSGPSSNLPLPLSSS) are compositionally biased toward low complexity.

It belongs to the glutamate-gated ion channel (TC 1.A.10.1) family. GRID1 subfamily. Homodimer. Interacts (via extracellular N-terminal domain) with CBLN1 (via C1q domain), and more weakly with CBLN2; the interactions mediate the trans-synaptic adhesion complexes also with neurexins and are required for ligand-gated cation channel activity. In terms of tissue distribution, equally in forebrain and cerebellum.

It is found in the postsynaptic cell membrane. It catalyses the reaction Ca(2+)(in) = Ca(2+)(out). The enzyme catalyses Na(+)(in) = Na(+)(out). Member of the ionotropic glutamate receptor family, which plays a crucial role in synaptic organization and signal transduction in the central nervous system. Although it shares structural features with ionotropic glutamate receptors, does not bind glutamate as a primary ligand. Instead, forms trans-synaptic adhesion complexes with presynaptic neurexins and cerebellins, regulating NMDA and AMPA receptor activity and influencing synaptic plasticity through signal transduction. In the presence of NRX1B-CBLN1, forms cation-selective channels that are proposed to be gated by glycine and D-serine. However, recent research disputes this ligand-gated cation channel activity. Cation-selective ion channel can be triggered by GRM1 in dopaminergic neurons. Also acts as a receptor for GABA, modulating inhibitory synaptic plasticity through non-ionotropic mechanisms. The protein is Glutamate receptor ionotropic, delta-1 (Grid1) of Mus musculus (Mouse).